Reading from the N-terminus, the 397-residue chain is Multidrug resistance protein MdtH (397 aa).

10 helical membrane passes run 11–31 (WFLA…MPMI), 71–91 (FGAR…FASL), 94–114 (AQSG…GCLF), 137–157 (LLMM…SWLL), 163–183 (YVCL…LLIL), 211–231 (LVLI…IFPI), 242–262 (AVGW…YPLA), 291–311 (FATT…GIVI), 338–358 (LGLA…HDYA), and 366–386 (LPWL…VNCF).

Belongs to the major facilitator superfamily. DHA1 family. MdtH (TC 2.A.1.2.21) subfamily.

It is found in the cell inner membrane. The chain is Multidrug resistance protein MdtH from Aeromonas salmonicida (strain A449).